Here is a 275-residue protein sequence, read N- to C-terminus: NAD kinase (275 aa).

The Proton acceptor role is filled by Asp-66. Residues 66 to 67, 138 to 139, His-168, Asp-170, 181 to 186, and Val-205 contribute to the NAD(+) site; these read DG, NE, and TAYNLS.

It belongs to the NAD kinase family. It depends on a divalent metal cation as a cofactor.

It localises to the cytoplasm. It carries out the reaction NAD(+) + ATP = ADP + NADP(+) + H(+). Its function is as follows. Involved in the regulation of the intracellular balance of NAD and NADP, and is a key enzyme in the biosynthesis of NADP. Catalyzes specifically the phosphorylation on 2'-hydroxyl of the adenosine moiety of NAD to yield NADP. This chain is NAD kinase, found in Halorubrum lacusprofundi (strain ATCC 49239 / DSM 5036 / JCM 8891 / ACAM 34).